A 94-amino-acid polypeptide reads, in one-letter code: Small ribosomal subunit protein bS6 (94 aa).

Belongs to the bacterial ribosomal protein bS6 family.

Its function is as follows. Binds together with bS18 to 16S ribosomal RNA. The chain is Small ribosomal subunit protein bS6 from Alkaliphilus oremlandii (strain OhILAs) (Clostridium oremlandii (strain OhILAs)).